Consider the following 164-residue polypeptide: Thiol peroxidase (164 aa).

One can recognise a Thioredoxin domain in the interval 16–162 (LQVGEIAHDF…YDAAIEAVKV (147 aa)). C58 serves as the catalytic Cysteine sulfenic acid (-SOH) intermediate. C58 and C92 form a disulfide bridge.

This sequence belongs to the peroxiredoxin family. Tpx subfamily. In terms of assembly, homodimer.

The enzyme catalyses a hydroperoxide + [thioredoxin]-dithiol = an alcohol + [thioredoxin]-disulfide + H2O. Functionally, thiol-specific peroxidase that catalyzes the reduction of hydrogen peroxide and organic hydroperoxides to water and alcohols, respectively. Plays a role in cell protection against oxidative stress by detoxifying peroxides. This is Thiol peroxidase from Streptococcus parasanguinis.